The chain runs to 530 residues: Bifunctional purine biosynthesis protein PurH (530 aa).

An MGS-like domain is found at 1–148; that stretch reads MNNARPIRRA…KNHKDVTIVV (148 aa).

Belongs to the PurH family.

The catalysed reaction is (6R)-10-formyltetrahydrofolate + 5-amino-1-(5-phospho-beta-D-ribosyl)imidazole-4-carboxamide = 5-formamido-1-(5-phospho-D-ribosyl)imidazole-4-carboxamide + (6S)-5,6,7,8-tetrahydrofolate. It catalyses the reaction IMP + H2O = 5-formamido-1-(5-phospho-D-ribosyl)imidazole-4-carboxamide. The protein operates within purine metabolism; IMP biosynthesis via de novo pathway; 5-formamido-1-(5-phospho-D-ribosyl)imidazole-4-carboxamide from 5-amino-1-(5-phospho-D-ribosyl)imidazole-4-carboxamide (10-formyl THF route): step 1/1. It functions in the pathway purine metabolism; IMP biosynthesis via de novo pathway; IMP from 5-formamido-1-(5-phospho-D-ribosyl)imidazole-4-carboxamide: step 1/1. The chain is Bifunctional purine biosynthesis protein PurH from Vibrio parahaemolyticus serotype O3:K6 (strain RIMD 2210633).